Consider the following 95-residue polypeptide: Large ribosomal subunit protein uL23 (95 aa).

This sequence belongs to the universal ribosomal protein uL23 family. In terms of assembly, part of the 50S ribosomal subunit. Contacts protein L29, and trigger factor when it is bound to the ribosome.

One of the early assembly proteins it binds 23S rRNA. One of the proteins that surrounds the polypeptide exit tunnel on the outside of the ribosome. Forms the main docking site for trigger factor binding to the ribosome. The polypeptide is Large ribosomal subunit protein uL23 (Rubrobacter xylanophilus (strain DSM 9941 / JCM 11954 / NBRC 16129 / PRD-1)).